Here is a 377-residue protein sequence, read N- to C-terminus: Opsin-2 (377 aa).

Topologically, residues 1–57 (MNNQSENYYHGAQFEALKSAGAIEMLGDGLTGDDLAAIPEHWLSYPAPPASAHTALA) are extracellular. Residue N3 is glycosylated (N-linked (GlcNAc...) asparagine). The helical transmembrane segment at 58 to 78 (LLYIFFTFAALVGNGMVIFIF) threads the bilayer. Residues 79–89 (STTKSLRTSSN) lie on the Cytoplasmic side of the membrane. Residues 90–110 (FLVLNLAILDFIMMAKAPIFI) form a helical membrane-spanning segment. Residues 111 to 126 (YNSAMRGFAVGTVGCQ) lie on the Extracellular side of the membrane. C125 and C202 form a disulfide bridge. A helical transmembrane segment spans residues 127-146 (IFALMGAYSGIGAGMTNACI). At 147-166 (AYDRHSTITRPLDGRLSEGK) the chain is on the cytoplasmic side. A helical membrane pass occupies residues 167–187 (VLLMVAFVWIYSTPWALLPLL). At 188 to 214 (KIWGRYVPEGYLTSCSFDYLTNTFDTK) the chain is on the extracellular side. Residues 215–235 (LFVACIFTCSYVFPMSLIIYF) traverse the membrane as a helical segment. Topologically, residues 236–283 (YSGIVKQVFAHEAALREQAKKMNVESLRANQGGSSESAEIRIAKAALT) are cytoplasmic. A helical membrane pass occupies residues 284–304 (VCFLFVASWTPYGVMALIGAF). The Extracellular portion of the chain corresponds to 305–314 (GNQQLLTPGV). The helical transmembrane segment at 315-335 (TMIPAVACKAVACISPWVYAI) threads the bilayer. Residues 336 to 377 (RHPMYRQELQRRMPWLQIDEPDDTVSTATSNTTNSAPPAATA) lie on the Cytoplasmic side of the membrane. The segment at 355–377 (EPDDTVSTATSNTTNSAPPAATA) is disordered. A compositionally biased stretch (low complexity) spans 361-377 (STATSNTTNSAPPAATA).

Belongs to the G-protein coupled receptor 1 family. Opsin subfamily. In terms of tissue distribution, in the retina, expression is essentially uniformly distributed, but a higher level is seen in the dorsal region of the retina and in the dorsal rim retinulae.

It is found in the membrane. Visual pigments are the light-absorbing molecules that mediate vision. They consist of an apoprotein, opsin, covalently linked to cis-retinal. May play a role in photoperiodic photoreception. The protein is Opsin-2 (OP2) of Manduca sexta (Tobacco hawkmoth).